The primary structure comprises 573 residues: MSDKPLTDLTFSSFDLHPALVAGLESAGFTRCTPIQALTLPVALPGGDVAGQAQTGTGKTLAFLVAVMNRLLIRPALADRKPEDPRALILAPTRELAIQIHKDAVKFGADLGLRFALVYGGVDYDKQRELLQQGVDVIIATPGRLIDYVKQHKVVSLHACEICVLDEADRMFDLGFIKDIRFLLRRMPERGTRQTLLFSATLSHRVLELAYEHMNEPEKLVVETETITAARVRQRIYFPSDEEKQTLLLGLLSRSEGARTMVFVNTKAFVERVARTLERHGYRVGVLSGDVPQKKRESLLNRFQKGQLEILVATDVAARGLHIDGVKYVYNYDLPFDAEDYVHRIGRTARLGEEGDAISFACERYAMSLPDIEAYIEQKIPVEPVTTELLTPLPRTPRATVEGEEVDDDAGDSVGTIFREAREQRAADEARRGGGRSGPGGASRSGSGGGRRDGAGADGKPRPPRRKPRVEGEADPAAAPSETPVVVAAAAETPAVTAAEGERAPRKRRRRRNGRPVEGAEPVVASTPVPAPAAPRKPTQVVAKPVRAAAKPSGSPSLLSRIGRRLRSLVSGS.

The Q motif signature appears at 9-37 (LTFSSFDLHPALVAGLESAGFTRCTPIQA). The region spanning 40–220 (LPVALPGGDV…YEHMNEPEKL (181 aa)) is the Helicase ATP-binding domain. 53–60 (AQTGTGKT) contributes to the ATP binding site. The DEAD box motif lies at 166–169 (DEAD). The Helicase C-terminal domain occupies 231 to 393 (RVRQRIYFPS…PVTTELLTPL (163 aa)). Residues 391-400 (TPLPRTPRAT) are compositionally biased toward low complexity. A disordered region spans residues 391-559 (TPLPRTPRAT…AKPSGSPSLL (169 aa)). Residues 402-411 (EGEEVDDDAG) show a composition bias toward acidic residues. Residues 419 to 432 (REAREQRAADEARR) are compositionally biased toward basic and acidic residues. Positions 435–449 (GRSGPGGASRSGSGG) are enriched in gly residues. Basic and acidic residues predominate over residues 450–461 (GRRDGAGADGKP). Low complexity predominate over residues 476–499 (PAAAPSETPVVVAAAAETPAVTAA). The segment covering 505–514 (PRKRRRRRNG) has biased composition (basic residues). 2 stretches are compositionally biased toward low complexity: residues 516 to 528 (PVEGAEPVVASTP) and 541 to 559 (VVAKPVRAAAKPSGSPSLL).

Belongs to the DEAD box helicase family. RhlB subfamily. Component of the RNA degradosome, which is a multiprotein complex involved in RNA processing and mRNA degradation.

It is found in the cytoplasm. The enzyme catalyses ATP + H2O = ADP + phosphate + H(+). Its function is as follows. DEAD-box RNA helicase involved in RNA degradation. Has RNA-dependent ATPase activity and unwinds double-stranded RNA. This Xanthomonas campestris pv. campestris (strain B100) protein is ATP-dependent RNA helicase RhlB.